Consider the following 98-residue polypeptide: TACTATQQTAAYKTLVSILSESSFSQCSKDSGYSMLTATALPTNAQYKLMCASTACNTMIKKIVALNPPDCDLTVPTSGLVLDVYTYANGFSSKCASL.

3 disulfides stabilise this stretch: cysteine 3–cysteine 71, cysteine 27–cysteine 56, and cysteine 51–cysteine 95. The Beak-like motif 1 (ligand binding) signature appears at 33–42; sequence YSMLTATALP. Residues 72-83 carry the Beak-like motif 2 (ligand binding) motif; sequence DLTVPTSGLVLD.

The protein belongs to the elicitin family.

It is found in the secreted. Induces local and distal defense responses (incompatible hypersensitive reaction) in plants from the solanaceae and cruciferae families. Elicits leaf necrosis and causes the accumulation of pathogenesis-related proteins. Might interact with the lipidic molecules of the plasma membrane. Elicitins are able to load, carry, and transfer sterols between membranes. The chain is Beta-elicitin cinnamomin from Phytophthora cinnamomi (Cinnamon fungus).